The sequence spans 176 residues: Japanin (176 aa).

A signal peptide spans 1 to 24; it reads MKVLRCLVCSFYIIVSLITTMTIG. E47 is a binding site for cholesterol. 2 disulfide bridges follow: C52–C174 and C138–C162. N-linked (GlcNAc...) asparagine glycosylation is found at N59 and N155.

Belongs to the calycin superfamily. Lipocalin family. In terms of assembly, homodimer; non-disulfide-linked. Each monomer accommodates one molecule of cholesterol in a pocket. As to expression, expressed in salivary glands.

The protein resides in the secreted. Salivary tick protein that modulates host immune response. This protein blocks dendritic cell (DC) differentiation from monocytes. In addition, it inhibits up-regulation of costimulatory molecules and pro-inflammatory cytokines in response to stimuli and promotes up-regulation of co-inhibitory molecules and the anti-inflammatory cytokine interleukin-10. It has a pocket to accomodate cholesterol, which may have immune-modulatory roles, either directly or through interactions with the host gut microbiota. The protein is Japanin of Rhipicephalus appendiculatus (Brown ear tick).